The primary structure comprises 298 residues: Cobalt-precorrin-5B C(1)-methyltransferase (298 aa).

The protein belongs to the CbiD family.

It carries out the reaction Co-precorrin-5B + S-adenosyl-L-methionine = Co-precorrin-6A + S-adenosyl-L-homocysteine. The protein operates within cofactor biosynthesis; adenosylcobalamin biosynthesis; cob(II)yrinate a,c-diamide from sirohydrochlorin (anaerobic route): step 6/10. Its function is as follows. Catalyzes the methylation of C-1 in cobalt-precorrin-5B to form cobalt-precorrin-6A. This Archaeoglobus fulgidus (strain ATCC 49558 / DSM 4304 / JCM 9628 / NBRC 100126 / VC-16) protein is Cobalt-precorrin-5B C(1)-methyltransferase.